The chain runs to 372 residues: Aminomethyltransferase (372 aa).

The protein belongs to the GcvT family. As to quaternary structure, the glycine cleavage system is composed of four proteins: P, T, L and H.

The catalysed reaction is N(6)-[(R)-S(8)-aminomethyldihydrolipoyl]-L-lysyl-[protein] + (6S)-5,6,7,8-tetrahydrofolate = N(6)-[(R)-dihydrolipoyl]-L-lysyl-[protein] + (6R)-5,10-methylene-5,6,7,8-tetrahydrofolate + NH4(+). The glycine cleavage system catalyzes the degradation of glycine. This is Aminomethyltransferase from Streptomyces coelicolor (strain ATCC BAA-471 / A3(2) / M145).